Consider the following 503-residue polypeptide: Glutamate--tRNA ligase (503 aa).

Positions 14-24 (PSPTGSLHIGG) match the 'HIGH' region motif. The 'KMSKS' region signature appears at 261 to 265 (KLSKR). ATP is bound at residue Lys-264.

The protein belongs to the class-I aminoacyl-tRNA synthetase family. Glutamate--tRNA ligase type 1 subfamily. In terms of assembly, monomer.

Its subcellular location is the cytoplasm. It catalyses the reaction tRNA(Glu) + L-glutamate + ATP = L-glutamyl-tRNA(Glu) + AMP + diphosphate. Its function is as follows. Catalyzes the attachment of glutamate to tRNA(Glu) in a two-step reaction: glutamate is first activated by ATP to form Glu-AMP and then transferred to the acceptor end of tRNA(Glu). The protein is Glutamate--tRNA ligase of Chloroflexus aurantiacus (strain ATCC 29366 / DSM 635 / J-10-fl).